We begin with the raw amino-acid sequence, 380 residues long: MGGIRLDTKQLKQDIIDYAYTIGIDSIGFTTADPFDELKQKLEAYHANGYASGFEESDIALRTEPKLSLPTARSIIAIAVGYPNKLKGAPKSVRGDRRGLFARASWGQDYHTIMRKRLDMLAAFIESKVPDVEIKSMVDTGVLSDRAVAERAGLGFVGRNGFVINPKLGTWTYLGEMLVSIPFEPDDPLLDSCGDCTICVDRCPTSALVGNGQLNSQKCISFLTQTKGYMPDQYRYKIGNRLYGCDTCQQVCPKNRGINTEQDDIILEPEILKPRLVPLLRMSNKEFKQTYGHLAGAWRGKKPIQRNAILALAHFNEVDAIPELKKVATTDERPLIRATAYWAIGQILGEEARDFINANYDQEDAEVQNEMIKGLDTRRE.

Aspartate 139 functions as the Proton donor in the catalytic mechanism. The 4Fe-4S ferredoxin-type 1 domain occupies 181 to 213 (IPFEPDDPLLDSCGDCTICVDRCPTSALVGNGQ). 8 residues coordinate [4Fe-4S] cluster: cysteine 193, cysteine 196, cysteine 199, cysteine 203, cysteine 219, cysteine 245, cysteine 248, and cysteine 252. In terms of domain architecture, 4Fe-4S ferredoxin-type 2 spans 234–263 (YRYKIGNRLYGCDTCQQVCPKNRGINTEQD).

It belongs to the QueG family. In terms of assembly, monomer. Requires cob(II)alamin as cofactor. [4Fe-4S] cluster is required as a cofactor.

The protein localises to the cytoplasm. The catalysed reaction is epoxyqueuosine(34) in tRNA + AH2 = queuosine(34) in tRNA + A + H2O. Its pathway is tRNA modification; tRNA-queuosine biosynthesis. Catalyzes the conversion of epoxyqueuosine (oQ) to queuosine (Q), which is a hypermodified base found in the wobble positions of tRNA(Asp), tRNA(Asn), tRNA(His) and tRNA(Tyr). The protein is Epoxyqueuosine reductase of Staphylococcus aureus (strain NCTC 8325 / PS 47).